The primary structure comprises 59 residues: Large ribosomal subunit protein uL30 (59 aa).

The protein belongs to the universal ribosomal protein uL30 family. As to quaternary structure, part of the 50S ribosomal subunit.

In Psychrobacter sp. (strain PRwf-1), this protein is Large ribosomal subunit protein uL30.